The chain runs to 345 residues: Biotin synthase (345 aa).

The 219-residue stretch at 38–256 (RQVQVSTLLS…IAVARIMMPA (219 aa)) folds into the Radical SAM core domain. Residues C53, C57, and C60 each contribute to the [4Fe-4S] cluster site. 4 residues coordinate [2Fe-2S] cluster: C97, C128, C188, and R260.

Belongs to the radical SAM superfamily. Biotin synthase family. Homodimer. Requires [4Fe-4S] cluster as cofactor. [2Fe-2S] cluster serves as cofactor.

The catalysed reaction is (4R,5S)-dethiobiotin + (sulfur carrier)-SH + 2 reduced [2Fe-2S]-[ferredoxin] + 2 S-adenosyl-L-methionine = (sulfur carrier)-H + biotin + 2 5'-deoxyadenosine + 2 L-methionine + 2 oxidized [2Fe-2S]-[ferredoxin]. Its pathway is cofactor biosynthesis; biotin biosynthesis; biotin from 7,8-diaminononanoate: step 2/2. Its function is as follows. Catalyzes the conversion of dethiobiotin (DTB) to biotin by the insertion of a sulfur atom into dethiobiotin via a radical-based mechanism. The protein is Biotin synthase of Serratia proteamaculans (strain 568).